Consider the following 524-residue polypeptide: Excitatory amino acid transporter 3 (524 aa).

Topologically, residues 1–18 (MGKPARKGCDSKRFLKNN) are cytoplasmic. The helical transmembrane segment at 19–38 (WLLLSTVVAVVLGIVIGVLV) threads the bilayer. Over 39–61 (REYSNLSTLDKFYFAFPGEILMR) the chain is Extracellular. A glycan (N-linked (GlcNAc...) asparagine) is linked at Asn-43. Residues 62-82 (MLKLVILPLIVSSMITGVAAL) traverse the membrane as a helical segment. The Cytoplasmic portion of the chain corresponds to 83-93 (DSNVSGKIGLR). The chain crosses the membrane as a helical span at residues 94–114 (AVLYYFCTTIIAVILGIVLVV). Residues Tyr-98, Thr-101, and Thr-102 each coordinate Na(+). The Extracellular portion of the chain corresponds to 115 to 205 (SIKPGVTQKV…RTKEYRVVGL (91 aa)). N-linked (GlcNAc...) asparagine glycans are attached at residues Asn-178 and Asn-195. Residues 206-229 (YSDGINVLGLIVFCLVFGLVIGKM) form a helical membrane-spanning segment. The Cytoplasmic portion of the chain corresponds to 230 to 238 (GEKGQILVD). The chain crosses the membrane as a helical span at residues 239–266 (FFNALSDATMKIVQIIMCYMPLGILFLI). The Extracellular segment spans residues 267 to 286 (AGKIIEVEDWEIFRKLGLYM). The chain crosses the membrane as a helical span at residues 287–308 (VTVLSGLAIHSIVILPLIYFIV). At 309 to 313 (VRKNP) the chain is on the cytoplasmic side. Residues 314 to 344 (FRFAMGMTQALLTALMISSSSATLPVTFRCA) constitute an intramembrane region (discontinuously helical). Positions 331 and 333 each coordinate L-aspartate. Residues 345 to 353 (EEKNRVDKR) lie on the Cytoplasmic side of the membrane. Residues 354 to 380 (ITRFVLPVGATINMDGTALYEAVAAVF) traverse the membrane as a helical segment. Gly-362, Thr-364, Asn-366, and Asp-368 together coordinate Na(+). Thr-370 serves as a coordination point for L-aspartate. The Extracellular segment spans residues 381-393 (IAQLNDMDLSIGQ). An intramembrane region (discontinuously helical) is located at residues 394 to 427 (IITISVTATAASIGAAGVPQAGLVTMVIVLSAVG). Na(+) contacts are provided by Ser-405, Ile-406, and Ala-408. An L-aspartate-binding site is contributed by Val-411. The Extracellular segment spans residues 428-440 (LPAEDVTLIIAVD). A helical transmembrane segment spans residues 441-462 (WLLDRFRTVVNVLGDAFGTGIV). The L-aspartate site is built by Arg-447, Thr-448, and Asn-451. Positions 451 and 455 each coordinate Na(+). Residues 463-524 (EKLSKKELEQ…TISFTQTSQF (62 aa)) lie on the Cytoplasmic side of the membrane. Phosphoserine occurs at positions 517 and 522.

It belongs to the dicarboxylate/amino acid:cation symporter (DAACS) (TC 2.A.23) family. SLC1A1 subfamily. In terms of assembly, homotrimer. Interacts with ARL6IP5. Interacts with RTN2 (via N-terminus); the interaction promotes cell surface expression of SLC1A1. Interacts with SORCS2; this interaction is important for normal expression at the cell membrane. Brain, but also small intestine, kidney, liver and heart.

It localises to the cell membrane. The protein resides in the apical cell membrane. Its subcellular location is the synapse. It is found in the synaptosome. The protein localises to the early endosome membrane. It localises to the late endosome membrane. The protein resides in the recycling endosome membrane. The enzyme catalyses K(+)(in) + L-glutamate(out) + 3 Na(+)(out) + H(+)(out) = K(+)(out) + L-glutamate(in) + 3 Na(+)(in) + H(+)(in). It carries out the reaction K(+)(in) + L-aspartate(out) + 3 Na(+)(out) + H(+)(out) = K(+)(out) + L-aspartate(in) + 3 Na(+)(in) + H(+)(in). It catalyses the reaction D-aspartate(out) + K(+)(in) + 3 Na(+)(out) + H(+)(out) = D-aspartate(in) + K(+)(out) + 3 Na(+)(in) + H(+)(in). The catalysed reaction is K(+)(in) + L-cysteine(out) + 3 Na(+)(out) + H(+)(out) = K(+)(out) + L-cysteine(in) + 3 Na(+)(in) + H(+)(in). Functionally, sodium-dependent, high-affinity amino acid transporter that mediates the uptake of L-glutamate and also L-aspartate and D-aspartate. Can also transport L-cysteine. Functions as a symporter that transports one amino acid molecule together with two or three Na(+) ions and one proton, in parallel with the counter-transport of one K(+) ion. Mediates Cl(-) flux that is not coupled to amino acid transport; this avoids the accumulation of negative charges due to aspartate and Na(+) symport. Plays an important role in L-glutamate and L-aspartate reabsorption in renal tubuli. Plays a redundant role in the rapid removal of released glutamate from the synaptic cleft, which is essential for terminating the postsynaptic action of glutamate. Contributes to glutathione biosynthesis and protection against oxidative stress via its role in L-glutamate and L-cysteine transport. Negatively regulated by ARL6IP5. The protein is Excitatory amino acid transporter 3 (SLC1A1) of Oryctolagus cuniculus (Rabbit).